We begin with the raw amino-acid sequence, 1755 residues long: Transposon Ty1-MR1 Gag-Pol polyprotein (1755 aa).

3 stretches are compositionally biased toward polar residues: residues 1–31 (MESQ…TTQD), 46–60 (VSTQ…TPLS), and 137–168 (VGTH…TNQH). Disordered stretches follow at residues 1 to 88 (MESQ…YPQQ), 137 to 174 (VGTH…PPPI), and 350 to 420 (QQES…IRGS). The tract at residues 299-401 (NNGIPINNKV…NSQSRTARAH (103 aa)) is RNA-binding. The segment covering 363 to 372 (SPSDEKKDSR) has biased composition (basic and acidic residues). Over residues 373 to 411 (TYTNTTKPKSITRNSQKPNNSQSRTARAHNVSTFNNSPG) the composition is skewed to polar residues. The active-site For protease activity; shared with dimeric partner is the Asp-461. The segment at 583 to 640 (NVHTSESTRKYPYPFIHRMLAHANAQTIRYSLKNNTITYFNESDVDWSSAIDYQCPDC) is integrase-type zinc finger-like. The region spanning 660-835 (NSYEPFQYLH…AGLDISTLLP (176 aa)) is the Integrase catalytic domain. Mg(2+)-binding residues include Asp-671 and Asp-736. The segment at 958–1172 (AVSPTDSTPP…LGGIGDSNAY (215 aa)) is disordered. Residues 960–969 (SPTDSTPPST) show a composition bias toward low complexity. Residues 1005-1015 (STPQISDIEST) show a composition bias toward polar residues. Basic and acidic residues predominate over residues 1038-1053 (ESSHASKSKDFRHSDS). Composition is skewed to polar residues over residues 1054 to 1082 (YSDN…QTSE) and 1095 to 1106 (SIDTSSSESNSL). Residues 1178–1212 (KKRSLEDNETEIKVSRDTWNTKNMRSLEPPRSKKR) carry the Bipartite nuclear localization signal motif. Residues 1338–1476 (NNYYITQLDI…DILGLEIKYQ (139 aa)) form the Reverse transcriptase Ty1/copia-type domain. Positions 1346, 1427, 1428, 1610, 1652, and 1685 each coordinate Mg(2+). An RNase H Ty1/copia-type domain is found at 1610 to 1752 (DASYGNQPYY…IKTFKLLTNK (143 aa)).

As to quaternary structure, the capsid protein forms a homotrimer, from which the VLPs are assembled. The protease is a homodimer, whose active site consists of two apposed aspartic acid residues. Initially, virus-like particles (VLPs) are composed of the structural unprocessed proteins Gag and Gag-Pol, and also contain the host initiator methionine tRNA (tRNA(i)-Met) which serves as a primer for minus-strand DNA synthesis, and a dimer of genomic Ty RNA. Processing of the polyproteins occurs within the particle and proceeds by an ordered pathway, called maturation. First, the protease (PR) is released by autocatalytic cleavage of the Gag-Pol polyprotein yielding capsid protein p45 and a Pol-p154 precursor protein. This cleavage is a prerequisite for subsequent processing of Pol-p154 at the remaining sites to release the mature structural and catalytic proteins. Maturation takes place prior to the RT reaction and is required to produce transposition-competent VLPs.

It localises to the cytoplasm. It is found in the nucleus. It carries out the reaction DNA(n) + a 2'-deoxyribonucleoside 5'-triphosphate = DNA(n+1) + diphosphate. The enzyme catalyses Endonucleolytic cleavage to 5'-phosphomonoester.. Capsid protein (CA) is the structural component of the virus-like particle (VLP), forming the shell that encapsulates the retrotransposons dimeric RNA genome. The particles are assembled from trimer-clustered units and there are holes in the capsid shells that allow for the diffusion of macromolecules. CA also has nucleocapsid-like chaperone activity, promoting primer tRNA(i)-Met annealing to the multipartite primer-binding site (PBS), dimerization of Ty1 RNA and initiation of reverse transcription. Its function is as follows. The aspartyl protease (PR) mediates the proteolytic cleavages of the Gag and Gag-Pol polyproteins after assembly of the VLP. Functionally, reverse transcriptase/ribonuclease H (RT) is a multifunctional enzyme that catalyzes the conversion of the retro-elements RNA genome into dsDNA within the VLP. The enzyme displays a DNA polymerase activity that can copy either DNA or RNA templates, and a ribonuclease H (RNase H) activity that cleaves the RNA strand of RNA-DNA heteroduplexes during plus-strand synthesis and hydrolyzes RNA primers. The conversion leads to a linear dsDNA copy of the retrotransposon that includes long terminal repeats (LTRs) at both ends. In terms of biological role, integrase (IN) targets the VLP to the nucleus, where a subparticle preintegration complex (PIC) containing at least integrase and the newly synthesized dsDNA copy of the retrotransposon must transit the nuclear membrane. Once in the nucleus, integrase performs the integration of the dsDNA into the host genome. In Saccharomyces cerevisiae (strain ATCC 204508 / S288c) (Baker's yeast), this protein is Transposon Ty1-MR1 Gag-Pol polyprotein (TY1B-MR1).